Reading from the N-terminus, the 201-residue chain is ATP-dependent Clp protease proteolytic subunit (201 aa).

The active-site Nucleophile is the Ser98. His123 is a catalytic residue.

The protein belongs to the peptidase S14 family. As to quaternary structure, fourteen ClpP subunits assemble into 2 heptameric rings which stack back to back to give a disk-like structure with a central cavity, resembling the structure of eukaryotic proteasomes.

Its subcellular location is the cytoplasm. The catalysed reaction is Hydrolysis of proteins to small peptides in the presence of ATP and magnesium. alpha-casein is the usual test substrate. In the absence of ATP, only oligopeptides shorter than five residues are hydrolyzed (such as succinyl-Leu-Tyr-|-NHMec, and Leu-Tyr-Leu-|-Tyr-Trp, in which cleavage of the -Tyr-|-Leu- and -Tyr-|-Trp bonds also occurs).. Functionally, cleaves peptides in various proteins in a process that requires ATP hydrolysis. Has a chymotrypsin-like activity. Plays a major role in the degradation of misfolded proteins. In Rickettsia akari (strain Hartford), this protein is ATP-dependent Clp protease proteolytic subunit.